The primary structure comprises 80 residues: MKTIILILLILGLGIDAKSLEESKADEEKFLRFIGSVIHGIGHLVHHIGVALGDDQQDNGKFYGYYAEDNGKHWYDTGDQ.

The N-terminal stretch at 1–17 (MKTIILILLILGLGIDA) is a signal peptide. Positions 18 to 29 (KSLEESKADEEK) are excised as a propeptide. Leu52 is modified (leucine amide). Residues 53–80 (GDDQQDNGKFYGYYAEDNGKHWYDTGDQ) constitute a propeptide that is removed on maturation.

Pharyngeal tissues and hemocytes.

The protein resides in the secreted. Exhibits broad-spectrum antimicrobial activity against both Gram-positive and Gram-negative bacteria. Has potent hemolytic activity. This chain is Clavaspirin, found in Styela clava (Sea squirt).